A 720-amino-acid chain; its full sequence is Proline-rich receptor-like protein kinase PERK12 (720 aa).

Residues 1–240 (MSDLGESPSS…GNGDGGGGGG (240 aa)) are disordered. At 1–246 (MSDLGESPSS…GGGGGYQGKT (246 aa)) the chain is on the extracellular side. The segment covering 10-25 (SSPPAPPADTAPPPET) has biased composition (pro residues). The segment covering 26–35 (PSENSALPPV) has biased composition (low complexity). Composition is skewed to pro residues over residues 52 to 84 (LSEP…PSDS) and 92 to 116 (PSPP…PAPP). Asn117 carries an N-linked (GlcNAc...) asparagine glycan. Pro residues-rich tracts occupy residues 123 to 138 (NPPP…PSSP) and 147 to 207 (PESP…PPKT). The chain crosses the membrane as a helical span at residues 247 to 267 (MVGMAVAGFAIMALIGVVFLV). At 268-720 (RRKKKRNIDS…ETRPFNNRRF (453 aa)) the chain is on the cytoplasmic side. The interval 300–349 (QDPGKGYSSGPNGSMYNNSQQQQSSMGNSYGTAGGGYPHHQMQSSGTPDS) is disordered. A compositionally biased stretch (low complexity) spans 311-330 (NGSMYNNSQQQQSSMGNSYG). In terms of domain architecture, Protein kinase spans 371-624 (FARKNILGEG…EVFRMIETAA (254 aa)). ATP is bound by residues 377-385 (LGEGGFGCV) and Lys399. Residue Tyr444 is modified to Phosphotyrosine. Asp495 serves as the catalytic Proton acceptor. Ser528 is subject to Phosphoserine. Phosphothreonine occurs at positions 529 and 534. A Phosphotyrosine modification is found at Tyr542. The disordered stretch occupies residues 698–720 (SAKSSSDFSGNESETRPFNNRRF).

Belongs to the protein kinase superfamily. Ser/Thr protein kinase family. Mostly expressed in apical parts, including flower buds, and particularly in anthers. Also present in root hairs.

The protein resides in the cell membrane. The catalysed reaction is L-seryl-[protein] + ATP = O-phospho-L-seryl-[protein] + ADP + H(+). The enzyme catalyses L-threonyl-[protein] + ATP = O-phospho-L-threonyl-[protein] + ADP + H(+). Functionally, regulates the auxin-related MAX (More Axillary Growth) pathway during the shoot branching. The sequence is that of Proline-rich receptor-like protein kinase PERK12 (PERK12) from Arabidopsis thaliana (Mouse-ear cress).